A 188-amino-acid chain; its full sequence is UPF0398 protein SSP1297 (188 aa).

This sequence belongs to the UPF0398 family.

The protein is UPF0398 protein SSP1297 of Staphylococcus saprophyticus subsp. saprophyticus (strain ATCC 15305 / DSM 20229 / NCIMB 8711 / NCTC 7292 / S-41).